The chain runs to 63 residues: Venom peptide 2a (63 aa).

The N-terminal stretch at 1–22 (MRGTSFILFAVVVILGFLNANA) is a signal peptide. AXPX repeat units follow at residues 22–25 (AEPL), 26–29 (ANPA), 32–35 (ANPD), 38–41 (ANPD), and 44–47 (ANPE). Positions 23-48 (EPLANPAPLANPDPLANPDPLANPEA) are excised as a propeptide. A Leucine amide modification is found at leucine 62.

Expressed by the venom gland.

It is found in the secreted. It localises to the target cell membrane. Its function is as follows. Antimicrobial peptide. Shows activities against Gram-positive bacteria (S.aureus MIC=50 uM and 200 ug/ml, and B.subtilis MIC=200 ug/ml), Gram-negative bacterium E.coli (MIC=100 uM and 200 ug/ml) and fungi (B.cinerea MIC=5 uM, S.cerevisiae MIC=128 ug/ml, S.pombe MIC=128 ug/ml, A.nidulans MIC=128 ug/ml, and C.albicans MIC=64-100 uM). Shows cytolytic activity against insect cell lines. Its hemolytic activity is controversial, as Baek and colleagues report no activity while Bea and colleagues note a hemolytic activity. In vivo, peptide injection in the vicinity of the head and thorax of lepidopteran larvae induces feeding disorder followed by death due to starvation. Is weakly lethal when tested on water flies (D.magna), but is not lethal on lady beetles (H.convergens). The sequence is that of Venom peptide 2a from Eumenes pomiformis (Potter wasp).